Consider the following 255-residue polypeptide: 1-(5-phosphoribosyl)-5-[(5-phosphoribosylamino)methylideneamino] imidazole-4-carboxamide isomerase (255 aa).

The Proton acceptor role is filled by aspartate 8. Aspartate 129 acts as the Proton donor in catalysis.

This sequence belongs to the HisA/HisF family.

Its subcellular location is the cytoplasm. It carries out the reaction 1-(5-phospho-beta-D-ribosyl)-5-[(5-phospho-beta-D-ribosylamino)methylideneamino]imidazole-4-carboxamide = 5-[(5-phospho-1-deoxy-D-ribulos-1-ylimino)methylamino]-1-(5-phospho-beta-D-ribosyl)imidazole-4-carboxamide. It functions in the pathway amino-acid biosynthesis; L-histidine biosynthesis; L-histidine from 5-phospho-alpha-D-ribose 1-diphosphate: step 4/9. The chain is 1-(5-phosphoribosyl)-5-[(5-phosphoribosylamino)methylideneamino] imidazole-4-carboxamide isomerase from Prochlorococcus marinus (strain MIT 9211).